The following is a 1780-amino-acid chain: Chitin synthase Vb (1780 aa).

6 N-linked (GlcNAc...) asparagine glycosylation sites follow: asparagine 133, asparagine 153, asparagine 629, asparagine 644, asparagine 655, and asparagine 660. The next 2 membrane-spanning stretches (helical) occupy residues 740–760 and 776–796; these read AWIAFVWALTFWIPSPLLKFI and FVLFFLIILINGMVVFWIIGF. The Cytochrome b5 heme-binding domain occupies 805–866; that stretch reads NKAWNVKEVA…LSGMVMDNYF (62 aa). Residues asparagine 888 and asparagine 1009 are each glycosylated (N-linked (GlcNAc...) asparagine). The chain crosses the membrane as a helical span at residues 1046–1066; that stretch reads LLLAFAIIICIVTAVKFLAAL. The N-linked (GlcNAc...) asparagine glycan is linked to asparagine 1411. 3 helical membrane-spanning segments follow: residues 1442–1462, 1469–1489, and 1497–1517; these read LCGTIILPSTCVYIGYLIYIL, IPYISLAMIGAVYGLQALIFI, and IGWMIIYILAFPIYSFILPLY. N-linked (GlcNAc...) asparagine glycosylation occurs at asparagine 1524. Residues 1649–1691 are disordered; that stretch reads TGVHDMRSQSPYQDYPGQHPSVSNLRGQANLSPATGGGHSRSG. Residues 1668–1681 are compositionally biased toward polar residues; that stretch reads PSVSNLRGQANLSP. One can recognise a DEK-C domain in the interval 1722–1778; it reads GPNDMAIVESIRSVLCEVDLDTVTKKQVRALVEQRLQTELVGERRTFMDRQIDHELE.

This sequence belongs to the chitin synthase family. Class VII subfamily.

Its subcellular location is the cell membrane. It catalyses the reaction [(1-&gt;4)-N-acetyl-beta-D-glucosaminyl](n) + UDP-N-acetyl-alpha-D-glucosamine = [(1-&gt;4)-N-acetyl-beta-D-glucosaminyl](n+1) + UDP + H(+). Polymerizes chitin, a structural polymer of the cell wall and septum, by transferring the sugar moiety of UDP-GlcNAc to the non-reducing end of the growing chitin polymer. ChsV and chsVb do perform additive, but not redundant, functions in septum formation. Functions not only in the maintenance of cell wall integrity under different osmotic conditions but also in polarized cell wall synthesis. Plays an important role in the complex infection process of this fungus. The protein is Chitin synthase Vb of Fusarium oxysporum f. sp. lycopersici (strain 4287 / CBS 123668 / FGSC 9935 / NRRL 34936) (Fusarium vascular wilt of tomato).